We begin with the raw amino-acid sequence, 273 residues long: MDLLLLQINPIAFHLGPIPVRWYGLLIVSGIILAYVVGQREAVKRGLPEDFLADLLLWAVPISIICARIYYVSMRWDYYSENPGKIIEIWNGGIAIHGALIGAFVTAYIFTRIKNVSFLRVADIAAPSILIGQIIGRWGNFMNQEAYGGPVSKEFLENLMLPDWIINQMYIEELGTYVHPTFLYESVWNLIGLIILLILRKVNLNRGEIFFSYLIWYSIGRFYIEGMRTDSLYLVGDLRSAQIVSIIGIVVGLGAIIYRRIKVKPAMKYLDNK.

The next 4 membrane-spanning stretches (helical) occupy residues 18–38 (IPVR…YVVG), 47–67 (LPED…IICA), 89–109 (IWNG…TAYI), and 116–136 (VSFL…QIIG). An a 1,2-diacyl-sn-glycero-3-phospho-(1'-sn-glycerol)-binding site is contributed by R137. Helical transmembrane passes span 178–198 (VHPT…ILLI), 207–227 (GEIF…IEGM), and 238–258 (LRSA…AIIY).

The protein belongs to the Lgt family.

It localises to the cell membrane. It catalyses the reaction L-cysteinyl-[prolipoprotein] + a 1,2-diacyl-sn-glycero-3-phospho-(1'-sn-glycerol) = an S-1,2-diacyl-sn-glyceryl-L-cysteinyl-[prolipoprotein] + sn-glycerol 1-phosphate + H(+). It functions in the pathway protein modification; lipoprotein biosynthesis (diacylglyceryl transfer). Its function is as follows. Catalyzes the transfer of the diacylglyceryl group from phosphatidylglycerol to the sulfhydryl group of the N-terminal cysteine of a prolipoprotein, the first step in the formation of mature lipoproteins. The polypeptide is Phosphatidylglycerol--prolipoprotein diacylglyceryl transferase (Lysinibacillus sphaericus (strain C3-41)).